Here is a 112-residue protein sequence, read N- to C-terminus: MSLTSSIRDKLYCMAEKKISEERRESTTQTAEELKVPSMEKELEELRREFFKFMEFCIPPKEVRDEVMKNLYNIPLSILKAFRTILDYEIKVLEERVKETERKPKSRRIAVE.

Coiled-coil stretches lie at residues 15–53 (AEKKISEERRESTTQTAEELKVPSMEKELEELRREFFKF) and 86–103 (LDYEIKVLEERVKETERK).

This is an uncharacterized protein from Aquifex aeolicus (strain VF5).